An 868-amino-acid chain; its full sequence is Leucine--tRNA ligase (868 aa).

The short motif at 42–52 (PYPSGKLHMGH) is the 'HIGH' region element. Residues 624–628 (TMSKS) carry the 'KMSKS' region motif. Position 627 (lysine 627) interacts with ATP.

It belongs to the class-I aminoacyl-tRNA synthetase family.

Its subcellular location is the cytoplasm. The catalysed reaction is tRNA(Leu) + L-leucine + ATP = L-leucyl-tRNA(Leu) + AMP + diphosphate. The polypeptide is Leucine--tRNA ligase (Nitrosomonas eutropha (strain DSM 101675 / C91 / Nm57)).